The primary structure comprises 614 residues: Sodium- and chloride-dependent betaine transporter (614 aa).

Residues 1–33 (MDRKVAVPEDGPPVVSWLPEEGEKLDQEGEDQV) are disordered. At 1–44 (MDRKVAVPEDGPPVVSWLPEEGEKLDQEGEDQVKDRGQWTNKME) the chain is on the cytoplasmic side. Residues 21 to 33 (EGEKLDQEGEDQV) show a composition bias toward basic and acidic residues. 3 helical membrane passes run 45-65 (FVLS…FPYL), 73-92 (AFFI…VFFL), and 117-137 (GIGL…IIIL). Residues 138–210 (AWALFYLFSS…SGIHDLGALR (73 aa)) are Extracellular-facing. Cysteine 157 and cysteine 166 are joined by a disulfide. N-linked (GlcNAc...) asparagine glycosylation is found at asparagine 171 and asparagine 183. Helical transmembrane passes span 211 to 229 (WELA…FCIW), 238 to 255 (VVYF…ILLI), 291 to 308 (IFFS…LGSY), 320 to 341 (IALC…FSIL), 374 to 393 (MPLS…FLGL), 423 to 441 (LLIL…FLVT), 458 to 478 (GICL…VYGA), 499 to 518 (ISWL…FSLS), and 538 to 556 (IGWF…FVII). The Cytoplasmic portion of the chain corresponds to 557–614 (TLLKTRGSFKKRLRQLTTPDPSLPQPKQHLYLDGGTSQDCGPSPTKEGLIVGEKETHL). Residues 591–614 (GTSQDCGPSPTKEGLIVGEKETHL) form a disordered region.

The protein belongs to the sodium:neurotransmitter symporter (SNF) (TC 2.A.22) family. SLC6A12 subfamily. As to quaternary structure, interacts with LIN7C. As to expression, kidney.

The protein resides in the basolateral cell membrane. It localises to the cell membrane. It carries out the reaction 4-aminobutanoate(out) + chloride(out) + 3 Na(+)(out) = 4-aminobutanoate(in) + chloride(in) + 3 Na(+)(in). The catalysed reaction is glycine betaine(out) + 2 chloride(out) + 3 Na(+)(out) = glycine betaine(in) + 2 chloride(in) + 3 Na(+)(in). In terms of biological role, transporter that mediates cellular uptake of betaine and GABA in a sodium- and chloride-dependent process. May have a role in regulation of GABAergic transmission in the brain through the reuptake of GABA into presynaptic terminals, as well as in osmotic regulation. Probably also involved in renal and hepatic osmotic regulation. The polypeptide is Sodium- and chloride-dependent betaine transporter (SLC6A12) (Canis lupus familiaris (Dog)).